Reading from the N-terminus, the 420-residue chain is MAGGYIARVNMKGHYLSWSSDNTYPWQNIQPTQNTKLLGLQDIGFTTDPVRRLRQHNSEIGGGAVRTTRAKGSWDMAAIVYGFPNKVAALRFEWAWQHPLKSRRLRDAVRSDLPASRAAQMQLTAKLHTLAAMLYTVPWSDQPLTLCWLQPDIADKWSNIWQRHCQCQSALPPFLTTRSGNLQDPLFQLNNAAAAASTIQRAALAADHHAWRLAAAAQAQAPDFFTGLGRLDLAAPSVEESGAGPHPSSCSVPPSTGSSAAPTPGALAPQPTKQNKFGVDPRLDSDDRDDNHQFESPDNHEAAAVNVDVVDDSADDGTTDGNEDGPDDVAPHQEVTARHVHGAIGETCGHCHQSVYQELCIVCLNATCTYRAHLLCAAQAAVHPLGQSSPSETRLVPLRHSCPRCAHQAHWASWIAEVTL.

The GIY-YIG domain maps to 19-106 (SSDNTYPWQN…QHPLKSRRLR (88 aa)). Disordered regions lie at residues 237–306 (SVEE…AAVN) and 311–330 (DDSA…DDVA). A compositionally biased stretch (low complexity) spans 247-266 (PSSCSVPPSTGSSAAPTPGA). Residues 279–301 (VDPRLDSDDRDDNHQFESPDNHE) show a composition bias toward basic and acidic residues. Over residues 311–327 (DDSADDGTTDGNEDGPD) the composition is skewed to acidic residues. Residues 348 to 405 (CGHCHQSVYQELCIVCLNATCTYRAHLLCAAQAAVHPLGQSSPSETRLVPLRHSCPRC) form an SLX1-type zinc finger.

It belongs to the SLX1 family. In terms of assembly, forms a heterodimer with a member of the SLX4 family. It depends on a divalent metal cation as a cofactor.

It localises to the nucleus. Functionally, catalytic subunit of a heterodimeric structure-specific endonuclease that resolves DNA secondary structures generated during DNA repair and recombination. Has endonuclease activity towards branched DNA substrates, introducing single-strand cuts in duplex DNA close to junctions with ss-DNA. This Monosiga brevicollis (Choanoflagellate) protein is Structure-specific endonuclease subunit SLX1 homolog.